Here is a 179-residue protein sequence, read N- to C-terminus: Large ribosomal subunit protein uL5 (179 aa).

Belongs to the universal ribosomal protein uL5 family. As to quaternary structure, part of the 50S ribosomal subunit; part of the 5S rRNA/L5/L18/L25 subcomplex. Contacts the 5S rRNA and the P site tRNA. Forms a bridge to the 30S subunit in the 70S ribosome.

This is one of the proteins that bind and probably mediate the attachment of the 5S RNA into the large ribosomal subunit, where it forms part of the central protuberance. In the 70S ribosome it contacts protein S13 of the 30S subunit (bridge B1b), connecting the 2 subunits; this bridge is implicated in subunit movement. Contacts the P site tRNA; the 5S rRNA and some of its associated proteins might help stabilize positioning of ribosome-bound tRNAs. The sequence is that of Large ribosomal subunit protein uL5 from Staphylococcus haemolyticus (strain JCSC1435).